The primary structure comprises 895 residues: Pentatricopeptide repeat-containing protein At1g74600, chloroplastic (895 aa).

The transit peptide at 1–71 (MNCLANESLN…CNLRTTKILQ (71 aa)) directs the protein to the chloroplast. PPR repeat units lie at residues 83 to 113 (DVFL…IPQP), 114 to 148 (DVVS…GFEA), 149 to 183 (NEIS…GYFF), 184 to 214 (YEVV…SLSA), 215 to 249 (NVYC…FQKP), 250 to 280 (DSYT…VIKC), 284 to 314 (DVFV…IPNP), 315 to 349 (SVVS…GVEI), 350 to 384 (NNCT…GFYL), 385 to 415 (DSSV…LDDI), 417 to 451 (RQNI…GLRT), 452 to 483 (DEFS…GLVL), 484 to 514 (DLTV…IPFK), 515 to 549 (DNAC…GTSP), 550 to 584 (DEST…GIDK), 585 to 615 (GMDL…LPEL), 616 to 650 (DPVS…GFTM), 651 to 685 (DSFA…GLCT), 686 to 716 (EPSV…INGP), 717 to 751 (DLIA…GFKP), 752 to 787 (DKVT…GIEP), and 788 to 818 (ENRH…MHIK). The type E motif; degenerate stretch occupies residues 824-895 (WGTLLAACKI…VQKEPGWSSV (72 aa)).

This sequence belongs to the PPR family. PCMP-E subfamily.

The protein localises to the plastid. The protein resides in the chloroplast. This is Pentatricopeptide repeat-containing protein At1g74600, chloroplastic (PCMP-E69) from Arabidopsis thaliana (Mouse-ear cress).